The sequence spans 79 residues: MELEAMSRYTSPVNPAVFPHLTVVLLAIGMFFTAWFFVYEVTSTKYTRDVYKELLISLVASLFMGFGVLFLLLWVGIYV.

Helical transmembrane passes span Val-17–Phe-37 and Leu-55–Val-75.

The protein belongs to the OST5 family. As to quaternary structure, component of the oligosaccharyltransferase (OST) complex.

The protein localises to the membrane. The protein resides in the endoplasmic reticulum. It localises to the cytoplasm. It participates in protein modification; protein glycosylation. In terms of biological role, subunit of the oligosaccharyl transferase (OST) complex that catalyzes the initial transfer of a defined glycan (Glc(3)Man(9)GlcNAc(2) in eukaryotes) from the lipid carrier dolichol-pyrophosphate to an asparagine residue within an Asn-X-Ser/Thr consensus motif in nascent polypeptide chains, the first step in protein N-glycosylation. N-glycosylation occurs cotranslationally and the complex associates with the Sec61 complex at the channel-forming translocon complex that mediates protein translocation across the endoplasmic reticulum (ER). All subunits are required for a maximal enzyme activity. This is Dolichyl-diphosphooligosaccharide--protein glycosyltransferase subunit TMEM258 from Xenopus laevis (African clawed frog).